We begin with the raw amino-acid sequence, 1468 residues long: ABC transporter G family member 34 (1468 aa).

The tract at residues 33 to 53 is disordered; that stretch reads NGAFSRSSSSSSRRMRGEEDD. In terms of domain architecture, ABC transporter 1 spans 178-450; sequence ANALGILPTR…FELMGFKCPE (273 aa). An ATP-binding site is contributed by 211–218; the sequence is GPPGSGKT. One can recognise an ABC transmembrane type-2 1 domain in the interval 528 to 741; it reads ELLKANIDRE…AQNAVSVNEF (214 aa). 6 helical membrane-spanning segments follow: residues 546-566, 575-595, 634-654, 666-686, 690-710, and 778-798; these read FVYIFRTIQLMTVSAMAMTVF, SVADGVIFMGALFFAVMMIML, SPMSFIEVGGFCFMSYYVIGF, LLMLAVSQMAAALFRFVGGAA, IVANVFGSFMLLIFMVLGGFI, and IGFGALLGFIMLFNILFTLAL. An ABC transporter 2 domain is found at 871-1123; the sequence is LTFEDIKYSV…ELIKYFEGIQ (253 aa). ATP is bound at residue 916 to 923; the sequence is GVSGAGKT. An ABC transmembrane type-2 2 domain is found at 1196 to 1410; that stretch reads IQCLACLWKQ…TLYGLIVSQY (215 aa). A run of 7 helical transmembrane segments spans residues 1217 to 1237, 1247 to 1267, 1303 to 1323, 1330 to 1350, 1360 to 1380, 1387 to 1407, and 1440 to 1460; these read AIRLFFTTVIALIFGTIFWDL, LFNAMGSMYAAVLFIGVLNGQ, FPYTLVQSVIYSIIVYSMIGF, FFWYLFFMFFTLLYFTFYGMM, VASIVSSAFYAIWNLFTGFVI, VWWRWYCWICPVAWTLYGLIV, and FVAVVIVAFTMLFAFLFGFAI.

The protein belongs to the ABC transporter superfamily. ABCG family. PDR (TC 3.A.1.205) subfamily.

It localises to the membrane. Its function is as follows. May be a general defense protein. The sequence is that of ABC transporter G family member 34 from Oryza sativa subsp. japonica (Rice).